Reading from the N-terminus, the 466-residue chain is Neuronal acetylcholine receptor subunit non-alpha-3 (466 aa).

A signal peptide spans 1-28; it reads MKLQISGLLLVTAVAYATIEAPEEFVSL. Topologically, residues 29–235 are extracellular; it reads AEMEDTLLRN…VTYSFILKRL (207 aa). N-linked (GlcNAc...) asparagine glycosylation is found at asparagine 54, asparagine 141, asparagine 169, and asparagine 208. The cysteines at positions 156 and 170 are disulfide-linked. Helical transmembrane passes span 236-260, 268-285, and 302-323; these read PLFYTLFLIIPCLGLSFLTVLVFYL, LLLSTSVLVSLTVFLLVI, and YLLFIMIFVTFSIIVTLFVINV. Over 324 to 438 the chain is Cytoplasmic; that stretch reads HHRSSATYHP…WKFVAQVLDR (115 aa). Residues 439-456 form a helical membrane-spanning segment; sequence IFLWVFLTASVLGTILIF.

Belongs to the ligand-gated ion channel (TC 1.A.9) family. Acetylcholine receptor (TC 1.A.9.1) subfamily. As to quaternary structure, neuronal AChR seems to be composed of two different type of subunits: alpha and non-alpha (beta). In terms of tissue distribution, retina, tectum and brain.

The protein localises to the postsynaptic cell membrane. Its subcellular location is the cell membrane. After binding acetylcholine, the AChR responds by an extensive change in conformation that affects all subunits and leads to opening of an ion-conducting channel across the plasma membrane. This chain is Neuronal acetylcholine receptor subunit non-alpha-3, found in Carassius auratus (Goldfish).